The sequence spans 178 residues: Major non-capsid protein (178 aa).

This sequence belongs to the tenuiviruses NCP family.

Its subcellular location is the host cytoplasm. Its function is as follows. Induces the formation of large intracellular inclusion body, organized in amorphous and crystalline arrays. Presumably the main cause of the stripe disease observed in host. This Avena sativa (Oat) protein is Major non-capsid protein.